The chain runs to 616 residues: Dihydroxy-acid dehydratase (616 aa).

D81 lines the Mg(2+) pocket. A [2Fe-2S] cluster-binding site is contributed by C122. The Mg(2+) site is built by D123 and K124. At K124 the chain carries N6-carboxylysine. C195 is a binding site for [2Fe-2S] cluster. Residue E491 participates in Mg(2+) binding. S517 acts as the Proton acceptor in catalysis.

This sequence belongs to the IlvD/Edd family. In terms of assembly, homodimer. Requires [2Fe-2S] cluster as cofactor. Mg(2+) serves as cofactor.

The catalysed reaction is (2R)-2,3-dihydroxy-3-methylbutanoate = 3-methyl-2-oxobutanoate + H2O. It carries out the reaction (2R,3R)-2,3-dihydroxy-3-methylpentanoate = (S)-3-methyl-2-oxopentanoate + H2O. It functions in the pathway amino-acid biosynthesis; L-isoleucine biosynthesis; L-isoleucine from 2-oxobutanoate: step 3/4. Its pathway is amino-acid biosynthesis; L-valine biosynthesis; L-valine from pyruvate: step 3/4. Its function is as follows. Functions in the biosynthesis of branched-chain amino acids. Catalyzes the dehydration of (2R,3R)-2,3-dihydroxy-3-methylpentanoate (2,3-dihydroxy-3-methylvalerate) into 2-oxo-3-methylpentanoate (2-oxo-3-methylvalerate) and of (2R)-2,3-dihydroxy-3-methylbutanoate (2,3-dihydroxyisovalerate) into 2-oxo-3-methylbutanoate (2-oxoisovalerate), the penultimate precursor to L-isoleucine and L-valine, respectively. This chain is Dihydroxy-acid dehydratase, found in Edwardsiella ictaluri (strain 93-146).